The sequence spans 88 residues: uncharacterized protein (88 aa).

It to E.coli YihD.

This is an uncharacterized protein from Haemophilus influenzae (strain ATCC 51907 / DSM 11121 / KW20 / Rd).